The chain runs to 412 residues: Divalent metal cation transporter MntH (412 aa).

Transmembrane regions (helical) follow at residues 19–39 (LSLM…GNFA), 46–66 (AAYG…AMLI), 98–118 (WVQA…GAAI), 122–142 (LLLG…TFLI), 155–175 (MVIG…LVFS), 196–216 (AVLL…IYLH), 241–261 (IAMT…AAAF), 286–306 (AAAV…TVVG), 348–368 (VLVL…VPLL), and 392–412 (LIVV…MSGI).

Belongs to the NRAMP family.

Its subcellular location is the cell inner membrane. Its function is as follows. H(+)-stimulated, divalent metal cation uptake system. The protein is Divalent metal cation transporter MntH of Pectobacterium carotovorum subsp. carotovorum (strain PC1).